The sequence spans 300 residues: Protoheme IX farnesyltransferase (300 aa).

Transmembrane regions (helical) follow at residues 24-44, 46-66, 99-119, 122-142, 145-165, 176-196, 220-240, 244-264, and 275-295; these read GLAI…IHEF, LETI…VGAS, AFTI…MINP, AMFG…LKTV, LSVF…WVAA, LFLI…WFLF, IVLY…GYTG, LTPV…VYAI, and AKTL…VYIL.

The protein belongs to the UbiA prenyltransferase family. Protoheme IX farnesyltransferase subfamily.

The protein resides in the cell inner membrane. The catalysed reaction is heme b + (2E,6E)-farnesyl diphosphate + H2O = Fe(II)-heme o + diphosphate. The protein operates within porphyrin-containing compound metabolism; heme O biosynthesis; heme O from protoheme: step 1/1. In terms of biological role, converts heme B (protoheme IX) to heme O by substitution of the vinyl group on carbon 2 of heme B porphyrin ring with a hydroxyethyl farnesyl side group. The sequence is that of Protoheme IX farnesyltransferase from Flavobacterium psychrophilum (strain ATCC 49511 / DSM 21280 / CIP 103535 / JIP02/86).